The chain runs to 64 residues: Alpha-conotoxin-like Ac1.1a (64 aa).

The first 21 residues, 1-21, serve as a signal peptide directing secretion; the sequence is MGMRMMFTLFLLVVLTTTVVS. Positions 22–47 are excised as a propeptide; sequence YPSDSASDGRDDEAKDERSDMYELKR. 2 cysteine pairs are disulfide-bonded: Cys-51-Cys-56 and Cys-52-Cys-62. Cys-62 bears the Cysteine amide mark.

The protein belongs to the conotoxin A superfamily. In terms of tissue distribution, expressed by the venom duct.

It is found in the secreted. Alpha-conotoxins act on postsynaptic membranes, they bind to the nicotinic acetylcholine receptors (nAChR) and thus inhibit them. The sequence is that of Alpha-conotoxin-like Ac1.1a from Conus achatinus (Little frog cone).